A 386-amino-acid chain; its full sequence is Lipid-A-disaccharide synthase (386 aa).

The protein belongs to the LpxB family.

It catalyses the reaction a lipid X + a UDP-2-N,3-O-bis[(3R)-3-hydroxyacyl]-alpha-D-glucosamine = a lipid A disaccharide + UDP + H(+). The protein operates within bacterial outer membrane biogenesis; LPS lipid A biosynthesis. Functionally, condensation of UDP-2,3-diacylglucosamine and 2,3-diacylglucosamine-1-phosphate to form lipid A disaccharide, a precursor of lipid A, a phosphorylated glycolipid that anchors the lipopolysaccharide to the outer membrane of the cell. This chain is Lipid-A-disaccharide synthase, found in Chromohalobacter salexigens (strain ATCC BAA-138 / DSM 3043 / CIP 106854 / NCIMB 13768 / 1H11).